A 116-amino-acid polypeptide reads, in one-letter code: Large ribosomal subunit protein bL17 (116 aa).

Belongs to the bacterial ribosomal protein bL17 family. As to quaternary structure, part of the 50S ribosomal subunit. Contacts protein L32.

The sequence is that of Large ribosomal subunit protein bL17 from Prochlorococcus marinus (strain MIT 9211).